Reading from the N-terminus, the 300-residue chain is O-methyltransferase phiE (300 aa).

Residues 130-131 and 157-158 each bind S-adenosyl-L-methionine; these read DL and DV.

Belongs to the class I-like SAM-binding methyltransferase superfamily. As to quaternary structure, homodimer.

The catalysed reaction is phomoidride A + S-adenosyl-L-methionine = (-)-phomoidride B + methanol + S-adenosyl-L-homocysteine + H(+). Its pathway is secondary metabolite biosynthesis. Functionally, O-methyltransferase; part of the gene cluster that mediates the biosynthesis of the antihypercholesterolemic agents phomoidrides which are dimeric anhydrides. Within the pathway, phiE catalyzes the acetalization reaction that converts phomoidride A to phomoidride B. The pathway begins with the highly reducing polyketide synthase phiA that catalyzes the formation of a C12-fatty acyl-ACP, starting from one acetate and 5 malonate units. The hydrolase phiM is involved in the release of the C12-fatty acyl chain from phiA. The alkylcitrate synthase (ACS) phiJ and the alkylcitrate dehydratase (ACDH) phiI then give rise to decarboxylated monomeric anhydrides by coupling the C12-fatty acyl chain with oxalacetic acid. The cyclase phiC is responsible for the dimerization of the monomeric anhydrides which leads to the production of prephomoidride that contains the characteristic bicyclo[4.3.1]deca-1,6-diene system of phomoidrides. Iterative oxidation catalyzed by the alpha-ketoglutarate-dependent dioxygenase phiK produced then phomoidride A. Finally, the methyltransferase phiE converts phomoidride A to phomoidride B via an acetalization reaction. The phosphatidylethanolamine-binding protein phiB and phiN are not essential for dimerization and their functions have still to be determined. The chain is O-methyltransferase phiE from Fungal sp. (strain ATCC 74256).